Here is a 345-residue protein sequence, read N- to C-terminus: NADH-quinone oxidoreductase subunit H (345 aa).

8 consecutive transmembrane segments (helical) span residues 13-33, 84-104, 115-135, 161-181, 190-210, 248-268, 278-298, and 309-329; these read VLII…LLFL, FMLA…VIPF, VAIL…IMGG, IGLI…SAIV, FFSW…ISAL, YIAI…GWLS, IWMV…KAIV, and LGWK…AFAA.

Belongs to the complex I subunit 1 family. In terms of assembly, NDH-1 is composed of 14 different subunits. Subunits NuoA, H, J, K, L, M, N constitute the membrane sector of the complex.

Its subcellular location is the cell inner membrane. It carries out the reaction a quinone + NADH + 5 H(+)(in) = a quinol + NAD(+) + 4 H(+)(out). NDH-1 shuttles electrons from NADH, via FMN and iron-sulfur (Fe-S) centers, to quinones in the respiratory chain. The immediate electron acceptor for the enzyme in this species is believed to be ubiquinone. Couples the redox reaction to proton translocation (for every two electrons transferred, four hydrogen ions are translocated across the cytoplasmic membrane), and thus conserves the redox energy in a proton gradient. This subunit may bind ubiquinone. This chain is NADH-quinone oxidoreductase subunit H, found in Dinoroseobacter shibae (strain DSM 16493 / NCIMB 14021 / DFL 12).